The sequence spans 290 residues: Dual-specificity RNA pseudouridine synthase RluF (290 aa).

An S4 RNA-binding domain is found at 7–74 (VRLNKYISES…EDLVLIALNK (68 aa)). Interaction with RNA stretches follow at residues 105-108 (RLDK) and 187-190 (RQIR). Catalysis depends on Asp-107, which acts as the Nucleophile. Positions 241–290 (SEAKPKAKAKPKTVGIKRPVVKMEKTAEKGGRPASNGKRFTSPGRKKKGR) are disordered. Residues 261–271 (VKMEKTAEKGG) are compositionally biased toward basic and acidic residues.

It belongs to the pseudouridine synthase RsuA family. In terms of assembly, monomer.

The enzyme catalyses uridine(2604) in 23S rRNA = pseudouridine(2604) in 23S rRNA. It catalyses the reaction uridine(35) in tRNA(Tyr) = pseudouridine(35) in tRNA(Tyr). In terms of biological role, dual specificity enzyme that catalyzes the synthesis of pseudouridine from uracil-2604 in 23S ribosomal RNA and from uracil-35 in the anticodon of tRNA(Tyr). The polypeptide is Dual-specificity RNA pseudouridine synthase RluF (rluF) (Escherichia coli O6:H1 (strain CFT073 / ATCC 700928 / UPEC)).